Reading from the N-terminus, the 253-residue chain is CENP-A recruiting complex protein mis20 (253 aa).

The tract at residues 113-136 (TGPTTSKNKHPSHSNTIRSPPYKV) is disordered.

In terms of assembly, component of the CENP-A recruiting complex composed of at least mis16, mis19, mis19 and mis20.

It is found in the cytoplasm. The protein localises to the cytoskeleton. Its subcellular location is the microtubule organizing center. It localises to the spindle pole body. The protein resides in the chromosome. It is found in the centromere. Functionally, component of the CENP-A recruiting complex that ensures the integrity of mitotic spindles through maintenance of kinetochore factors mis6/CENP-I and cnp1/CENP-A. Seems dispensable for proper chromosome segregation. The polypeptide is CENP-A recruiting complex protein mis20 (Schizosaccharomyces pombe (strain 972 / ATCC 24843) (Fission yeast)).